A 443-amino-acid chain; its full sequence is KICSTOR complex protein ITFG2 (443 aa).

Residues 19–48 form an FG-GAP 1; atypical repeat; sequence FPHAICLGDVDNDALNELVVGDTSGKLSVY. Position 104 is a phosphoserine (S104). One copy of the FG-GAP 2; atypical repeat lies at 125 to 154; it reads NTKVMLISDIDGDGCYELVVGYTDRVVRAF. The residue at position 219 (S219) is a Phosphoserine.

As to quaternary structure, part of the KICSTOR complex composed of KPTN, ITFG2, KICS2 and SZT2. SZT2 probably serves as a link between the other three proteins in the KICSTOR complex and may mediate the direct interaction with the GATOR complex via GATOR1. The KICSTOR complex interacts directly with the GATOR1 complex and most probably indirectly with the GATOR2 complex in an amino acid-independent manner.

It localises to the lysosome membrane. Its function is as follows. As part of the KICSTOR complex functions in the amino acid-sensing branch of the TORC1 signaling pathway. Recruits, in an amino acid-independent manner, the GATOR1 complex to the lysosomal membranes and allows its interaction with GATOR2 and the RAG GTPases. Functions upstream of the RAG GTPases and is required to negatively regulate mTORC1 signaling in absence of amino acids. In absence of the KICSTOR complex mTORC1 is constitutively localized to the lysosome and activated. The KICSTOR complex is also probably involved in the regulation of mTORC1 by glucose. In Mus musculus (Mouse), this protein is KICSTOR complex protein ITFG2.